A 640-amino-acid polypeptide reads, in one-letter code: Chaperone protein DnaK (640 aa).

Residue Thr-196 is modified to Phosphothreonine; by autocatalysis. Over residues 547–569 the composition is skewed to basic and acidic residues; the sequence is GDKIPSDKRPALEGALEKLKDAT. 2 disordered regions span residues 547 to 575 and 595 to 640; these read GDKI…GTTE and LYQA…GNGK. Residues 603 to 615 are compositionally biased toward polar residues; the sequence is TNASEPTQNTDGS. Residues 625-634 are compositionally biased toward acidic residues; sequence GEVENAEFEV.

This sequence belongs to the heat shock protein 70 family.

Its function is as follows. Acts as a chaperone. This is Chaperone protein DnaK from Chlorobium phaeobacteroides (strain DSM 266 / SMG 266 / 2430).